A 449-amino-acid polypeptide reads, in one-letter code: Ribulose bisphosphate carboxylase large chain (449 aa).

Lys7 is modified (N6,N6,N6-trimethyllysine). Residues Asn116 and Thr166 each coordinate substrate. Lys168 acts as the Proton acceptor in catalysis. Residue Lys170 coordinates substrate. The Mg(2+) site is built by Lys194, Asp196, and Glu197. Lys194 bears the N6-carboxylysine mark. The active-site Proton acceptor is the His287. Residues Arg288, His320, and Ser372 each contribute to the substrate site.

The protein belongs to the RuBisCO large chain family. Type I subfamily. As to quaternary structure, heterohexadecamer of 8 large chains and 8 small chains; disulfide-linked. The disulfide link is formed within the large subunit homodimers. Mg(2+) serves as cofactor. The disulfide bond which can form in the large chain dimeric partners within the hexadecamer appears to be associated with oxidative stress and protein turnover.

It localises to the plastid. The protein resides in the chloroplast. It carries out the reaction 2 (2R)-3-phosphoglycerate + 2 H(+) = D-ribulose 1,5-bisphosphate + CO2 + H2O. The enzyme catalyses D-ribulose 1,5-bisphosphate + O2 = 2-phosphoglycolate + (2R)-3-phosphoglycerate + 2 H(+). In terms of biological role, ruBisCO catalyzes two reactions: the carboxylation of D-ribulose 1,5-bisphosphate, the primary event in carbon dioxide fixation, as well as the oxidative fragmentation of the pentose substrate in the photorespiration process. Both reactions occur simultaneously and in competition at the same active site. The chain is Ribulose bisphosphate carboxylase large chain from Liriope muscari (Big blue lilyturf).